A 562-amino-acid polypeptide reads, in one-letter code: Phosphoglucomutase-1 (562 aa).

N-acetylmethionine is present on M1. K16 is modified (N6-acetyllysine). R23 is a binding site for alpha-D-glucose 1,6-bisphosphate. A Phosphothreonine modification is found at T115. S117 contacts alpha-D-glucose 1,6-bisphosphate. The active-site Phosphoserine intermediate is the S117. S117 contributes to the Mg(2+) binding site. A phosphoserine mark is found at S117 and S134. Position 185 is a phosphothreonine (T185). Residue S213 is modified to Phosphoserine. Residues D288, D290, and D292 each coordinate Mg(2+). 2 residues coordinate alpha-D-glucose 1,6-bisphosphate: D292 and R293. K349 bears the N6-acetyllysine mark. Y353 is subject to Phosphotyrosine. T357 is a binding site for alpha-D-glucose 1,6-bisphosphate. S369 is modified (phosphoserine). Positions 376, 378, and 389 each coordinate alpha-D-glucose 1,6-bisphosphate. S378 is modified (phosphoserine). K419 is modified (N6-succinyllysine). T467 carries the post-translational modification Phosphothreonine; by PAK1. Phosphoserine is present on residues S485 and S505. At T507 the chain carries Phosphothreonine. 2 positions are modified to phosphoserine: S509 and S541.

It belongs to the phosphohexose mutase family. As to quaternary structure, monomer. Mg(2+) serves as cofactor. Isoform 2 is the major calmodulin-dependent phosphoprotein in junctional skeletal sarcoplasmic reticulum vesicles. Post-translationally, phosphorylation at Thr-467 by PAK1 significantly enhances enzymatic activity.

The protein resides in the cytoplasm. The protein localises to the sarcoplasmic reticulum. The enzyme catalyses alpha-D-glucose 1-phosphate = alpha-D-glucose 6-phosphate. It carries out the reaction O-phospho-L-seryl-[protein] + alpha-D-glucose 1-phosphate = alpha-D-glucose 1,6-bisphosphate + L-seryl-[protein]. The catalysed reaction is alpha-D-glucose 1,6-bisphosphate + L-seryl-[protein] = O-phospho-L-seryl-[protein] + alpha-D-glucose 6-phosphate. Its activity is regulated as follows. Glucose-1,6-bisphosphate enhances phosphorylation of the active site Ser-117, and thereby increases enzyme activity. Its function is as follows. Catalyzes the reversible isomerization of alpha-D-glucose 1-phosphate to alpha-D-glucose 6-phosphate. The mechanism proceeds via the intermediate compound alpha-D-glucose 1,6-bisphosphate. This enzyme participates in both the breakdown and synthesis of glucose. This is Phosphoglucomutase-1 (PGM1) from Oryctolagus cuniculus (Rabbit).